Consider the following 935-residue polypeptide: UvrABC system protein A (935 aa).

Position 31–38 (31–38 (GLSGSGKS)) interacts with ATP. Residues 254–281 (CFKCKMSFEELEPLSFSFNSPKGACESC) form a C4-type zinc finger. 2 consecutive ABC transporter domains span residues 310 to 579 (IFGY…NNHS) and 599 to 931 (KEKH…KFLA). An ATP-binding site is contributed by 631 to 638 (GVSGSGKS). Residues 731-757 (CEKCQGDGDIKIEMHFLPDVLVQCDSC) form a C4-type zinc finger.

This sequence belongs to the ABC transporter superfamily. UvrA family. As to quaternary structure, forms a heterotetramer with UvrB during the search for lesions.

The protein resides in the cytoplasm. In terms of biological role, the UvrABC repair system catalyzes the recognition and processing of DNA lesions. UvrA is an ATPase and a DNA-binding protein. A damage recognition complex composed of 2 UvrA and 2 UvrB subunits scans DNA for abnormalities. When the presence of a lesion has been verified by UvrB, the UvrA molecules dissociate. The protein is UvrABC system protein A of Helicobacter pylori (strain ATCC 700392 / 26695) (Campylobacter pylori).